A 693-amino-acid chain; its full sequence is Endoprotease bli (693 aa).

The signal sequence occupies residues 1 to 20 (MYWQLVRILVLFDCLQKILA). A propeptide spans 21–116 (IEHDSICIAD…EQRPRVRRKR (96 aa)) (inhibition peptide). Ca(2+) is bound at residue Asp161. Residues 167-482 (QWYLNNGAQG…YGLMDAGALV (316 aa)) enclose the Peptidase S8 domain. Residue Asn194 is glycosylated (N-linked (GlcNAc...) asparagine). Asp201 serves as the catalytic Charge relay system. Residue Asp202 coordinates substrate. Ca(2+) is bound by residues Asp210, Asp222, Asp227, and Asp229. Positions 215–242 (YDPLASTDINGHDDDPTPQDDGDNKHGT) are disordered. 237 to 238 (DN) provides a ligand contact to substrate. Residue His240 is the Charge relay system of the active site. The Ca(2+) site is built by Ile251, Asn254, Tyr256, and Gly258. Disulfide bonds link Cys257/Cys406 and Cys349/Cys379. Substrate contacts are provided by residues Glu282, 299–304 (SWGPED), Asp310, and 338–341 (ASGN). Asp304 contacts Ca(2+). Residue Asp347 participates in Ca(2+) binding. Residues Asp352 and Tyr354 each contribute to the substrate site. Glu377 contacts Ca(2+). Ser414 serves as the catalytic Charge relay system. Ser414 lines the substrate pocket. Residues Asn433 and Asn518 are each glycosylated (N-linked (GlcNAc...) asparagine). The 139-residue stretch at 490-628 (TVPEQHICTY…SLLLYGTAEP (139 aa)) folds into the P/Homo B domain. Cysteines 497 and 526 form a disulfide. The interval 629–693 (AQPNDPRHSS…LVSAQPELRV (65 aa)) is disordered. The span at 668–681 (DSRDWQPKKVENKK) shows a compositional bias: basic and acidic residues.

The protein belongs to the peptidase S8 family. Furin subfamily. The cofactor is Ca(2+). In terms of processing, N-glycosylated. The inhibition peptide, which plays the role of an intramolecular chaperone, is probably autocatalytically removed in the endoplasmic reticulum (ER) and remains non-covalently bound as a potent autoinhibitor. Probably following transport to the trans Golgi, a second cleavage within the inhibition propeptide results in propeptide dissociation and bli activation.

The protein localises to the secreted. It carries out the reaction Release of mature proteins from their proproteins by cleavage of -Arg-Xaa-Yaa-Arg-|-Zaa- bonds, where Xaa can be any amino acid and Yaa is Arg or Lys. Releases albumin, complement component C3 and von Willebrand factor from their respective precursors.. With respect to regulation, inhibited by the propeptide before the second cleavage. Inhibited by ethylenediaminetetraacetic acid (EDTA), ZnSO(4) and chloroketone DEC-RVKR-CMK. Its function is as follows. Serine endoprotease which cleaves substrates at the RX(K/R)R consensus motif. This chain is Endoprotease bli, found in Onchocerca volvulus.